A 461-amino-acid chain; its full sequence is ATP synthase subunit beta 2 (461 aa).

151 to 158 contributes to the ATP binding site; sequence GGAGVGKT.

The protein belongs to the ATPase alpha/beta chains family. As to quaternary structure, F-type ATPases have 2 components, CF(1) - the catalytic core - and CF(0) - the membrane proton channel. CF(1) has five subunits: alpha(3), beta(3), gamma(1), delta(1), epsilon(1). CF(0) has three main subunits: a(1), b(2) and c(9-12). The alpha and beta chains form an alternating ring which encloses part of the gamma chain. CF(1) is attached to CF(0) by a central stalk formed by the gamma and epsilon chains, while a peripheral stalk is formed by the delta and b chains.

Its subcellular location is the cell inner membrane. It carries out the reaction ATP + H2O + 4 H(+)(in) = ADP + phosphate + 5 H(+)(out). In terms of biological role, produces ATP from ADP in the presence of a proton gradient across the membrane. The catalytic sites are hosted primarily by the beta subunits. This Photobacterium profundum (strain SS9) protein is ATP synthase subunit beta 2.